The following is a 397-amino-acid chain: G2/mitotic-specific cyclin-B2 (397 aa).

Disordered stretches follow at residues 1-20 (MALLRRPTVSSDLKNIDTGV) and 64-97 (KVTHVNKQPKPTASVKPVQMETLAPKDPPAPEDV). A Phosphothreonine modification is found at Thr-8. Ser-11 carries the phosphoserine modification. Over residues 64–74 (KVTHVNKQPKP) the composition is skewed to polar residues. 3 positions are modified to phosphoserine: Ser-77, Ser-98, and Ser-391.

This sequence belongs to the cyclin family. Cyclin AB subfamily. As to quaternary structure, interacts with the CDK1 protein kinase to form a serine/threonine kinase holoenzyme complex also known as maturation promoting factor (MPF). The cyclin subunit imparts substrate specificity to the complex.

Functionally, essential for the control of the cell cycle at the G2/M (mitosis) transition. This chain is G2/mitotic-specific cyclin-B2 (CCNB2), found in Mesocricetus auratus (Golden hamster).